A 429-amino-acid polypeptide reads, in one-letter code: GTPase Obg (429 aa).

An Obg domain is found at 1 to 158 (MFVDQVKIYV…RNVQLELKVL (158 aa)). Positions 124–145 (RGNKRFATPANPAPELSENGEP) are disordered. Residues 159–329 (ADVGLVGFPS…LLLAIADKLE (171 aa)) form the OBG-type G domain. GTP contacts are provided by residues 165-172 (GFPSVGKS), 190-194 (FTTIV), 212-215 (DLPG), 282-285 (NKMD), and 310-312 (SAV). 2 residues coordinate Mg(2+): Ser-172 and Thr-192. The OCT domain maps to 351 to 429 (KYVAEEPDFE…LLDYEFEFMD (79 aa)).

The protein belongs to the TRAFAC class OBG-HflX-like GTPase superfamily. OBG GTPase family. As to quaternary structure, monomer. Mg(2+) serves as cofactor.

The protein resides in the cytoplasm. Its function is as follows. An essential GTPase which binds GTP, GDP and possibly (p)ppGpp with moderate affinity, with high nucleotide exchange rates and a fairly low GTP hydrolysis rate. Plays a role in control of the cell cycle, stress response, ribosome biogenesis and in those bacteria that undergo differentiation, in morphogenesis control. The sequence is that of GTPase Obg from Listeria monocytogenes serotype 4b (strain F2365).